A 568-amino-acid chain; its full sequence is 4-hydroxy-7-methoxy-3-oxo-3,4-dihydro-2H-1,4-benzoxazin-2-yl glucoside beta-D-glucosidase, chloroplastic (568 aa).

The N-terminal 50 residues, 1–50 (MALLVGGTLNPTTHLSLRSRAGRNSENVWLRSAASSQTSKGRFCNLTVRA), are a transit peptide targeting the chloroplast. Residues Gln-92, His-194, and 239 to 240 (NE) each bind a beta-D-glucoside. Residue Glu-240 is the Proton donor of the active site. Residues Cys-259 and Cys-265 are joined by a disulfide bond. A beta-D-glucoside contacts are provided by residues Tyr-383, Glu-456, Trp-504, 511–512 (EW), and Phe-520. Glu-456 acts as the Nucleophile in catalysis.

The protein belongs to the glycosyl hydrolase 1 family. As to quaternary structure, homohexamer. As to expression, expressed in seedlings, mesocotyl, coleoptile, leaf sheath, and roots.

The protein resides in the plastid. It localises to the chloroplast. It carries out the reaction DIMBOA beta-D-glucoside + H2O = DIMBOA + D-glucose. It catalyses the reaction DIBOA beta-D-glucoside + H2O = DIBOA + D-glucose. The catalysed reaction is Hydrolysis of terminal, non-reducing beta-D-glucosyl residues with release of beta-D-glucose.. Its activity is regulated as follows. Inhibited by castanospermine, Ag(+) and Cu(2+). 34% inhibition by Zn(2+) and not affected by EDTA. Involved in defense of young plant parts against pests via the production of benzoxazolinones (hydroxamic acids) from hydroxamic acid glucosides. The preferred substrate is DIBOA-beta-D-glucoside. Can also use esculin and genistein glucoside as substrates, but no activity with salicin, p-nitrophenyl-alpha-glucoside or substrates related to cell wall components. The sequence is that of 4-hydroxy-7-methoxy-3-oxo-3,4-dihydro-2H-1,4-benzoxazin-2-yl glucoside beta-D-glucosidase, chloroplastic from Secale cereale (Rye).